The sequence spans 290 residues: 4-hydroxy-tetrahydrodipicolinate synthase (290 aa).

Position 44 (Thr-44) interacts with pyruvate. Catalysis depends on Tyr-132, which acts as the Proton donor/acceptor. Catalysis depends on Lys-160, which acts as the Schiff-base intermediate with substrate. Ile-202 is a pyruvate binding site.

It belongs to the DapA family. Homotetramer; dimer of dimers.

It localises to the cytoplasm. It carries out the reaction L-aspartate 4-semialdehyde + pyruvate = (2S,4S)-4-hydroxy-2,3,4,5-tetrahydrodipicolinate + H2O + H(+). The protein operates within amino-acid biosynthesis; L-lysine biosynthesis via DAP pathway; (S)-tetrahydrodipicolinate from L-aspartate: step 3/4. Its function is as follows. Catalyzes the condensation of (S)-aspartate-beta-semialdehyde [(S)-ASA] and pyruvate to 4-hydroxy-tetrahydrodipicolinate (HTPA). The protein is 4-hydroxy-tetrahydrodipicolinate synthase of Cereibacter sphaeroides (strain ATCC 17025 / ATH 2.4.3) (Rhodobacter sphaeroides).